The primary structure comprises 228 residues: Ribosomal RNA small subunit methyltransferase G (228 aa).

S-adenosyl-L-methionine-binding positions include Gly89, Leu94, 140 to 141 (VE), and Arg159.

The protein belongs to the methyltransferase superfamily. RNA methyltransferase RsmG family.

The protein resides in the cytoplasm. It carries out the reaction guanosine(527) in 16S rRNA + S-adenosyl-L-methionine = N(7)-methylguanosine(527) in 16S rRNA + S-adenosyl-L-homocysteine. Its function is as follows. Specifically methylates the N7 position of guanine in position 527 of 16S rRNA. The polypeptide is Ribosomal RNA small subunit methyltransferase G (Burkholderia cenocepacia (strain ATCC BAA-245 / DSM 16553 / LMG 16656 / NCTC 13227 / J2315 / CF5610) (Burkholderia cepacia (strain J2315))).